Reading from the N-terminus, the 929-residue chain is Transcription initiation factor TFIID subunit 3 (929 aa).

Disordered stretches follow at residues 131–152 (IVSS…TSAE) and 176–197 (LGKR…RPRL). Ser183, Ser199, Ser229, and Ser243 each carry phosphoserine. 2 disordered regions span residues 221–358 (TQKI…ETIQ) and 405–578 (DPFE…PWKE). Residues 265–288 (TKSFTPKTKTKTSSPGQKTKSPKT) are compositionally biased toward low complexity. Position 266 is an N6-acetyllysine (Lys266). Phosphoserine occurs at positions 291, 297, and 301. Polar residues-rich tracts occupy residues 340 to 358 (PNRT…ETIQ) and 434 to 466 (PKAS…SWTM). Thr501 is modified (phosphothreonine). The span at 504–514 (PLHKVYEEKTK) shows a compositional bias: basic and acidic residues. The segment covering 523 to 537 (KKLKKELKTKMKKKE) has biased composition (basic residues). Residues 538-578 (KQRDREREKDKNKDKSKEKDKVKEKEKDKETGRETKYPWKE) show a composition bias toward basic and acidic residues. Lys581 is covalently cross-linked (Glycyl lysine isopeptide (Lys-Gly) (interchain with G-Cter in SUMO2)). Composition is skewed to basic and acidic residues over residues 603-612 (KLKDGLVRKE) and 621-648 (KDRE…DKMK). The tract at residues 603-658 (KLKDGLVRKEKEKHKDKKKDREKGKKDKDKREKEKVKDKGREDKMKAPAPPLVLPP) is disordered. A Phosphoserine modification is found at Ser667. Residues 692-701 (EKEKVKEKEK) show a composition bias toward basic and acidic residues. The tract at residues 692–748 (EKEKVKEKEKKKDKKEKKKKKEKEKEKKEKEREKEKREREKREKEKEKHKHEKIKVE) is disordered. Positions 702 to 713 (KKDKKEKKKKKE) are enriched in basic residues. Residues 714-737 (KEKEKKEKEREKEKREREKREKEK) are compositionally biased toward basic and acidic residues. Lys746 participates in a covalent cross-link: Glycyl lysine isopeptide (Lys-Gly) (interchain with G-Cter in SUMO2). Ser755 is subject to Phosphoserine. Lys776 is modified (N6-acetyllysine). The span at 778-787 (VPAPEAKPAP) shows a compositional bias: low complexity. Positions 778–807 (VPAPEAKPAPSQNRPKTPPPAPAPAPGPML) are disordered. Residues 793-804 (KTPPPAPAPAPG) show a composition bias toward pro residues. The PHD-type zinc-finger motif lies at 865–915 (IWICPGCNKPDDGSPMIGCDDCDDWYHWPCVGIMTAPPEEMQWFCPKCANK). Zn(2+)-binding residues include Cys868, Cys871, Cys883, Cys886, His891, Cys894, Cys909, and Cys912.

It belongs to the TAF3 family. As to quaternary structure, component of the TFIID basal transcription factor complex, composed of TATA-box-binding protein TBP, and a number of TBP-associated factors (TAFs), including TAF1, TAF2, TAF3, TAF4, TAF5, TAF6, TAF7, TAF8, TAF9, TAF10, TAF11, TAF12 and TAF13. Interacts with TAF10 via the histone fold. Interacts with TAF13, TBP, SAP130 and GCN5L2. Interacts with TBPL2.

It localises to the nucleus. The TFIID basal transcription factor complex plays a major role in the initiation of RNA polymerase II (Pol II)-dependent transcription. TFIID recognizes and binds promoters with or without a TATA box via its subunit TBP, a TATA-box-binding protein, and promotes assembly of the pre-initiation complex (PIC). The TFIID complex consists of TBP and TBP-associated factors (TAFs), including TAF1, TAF2, TAF3, TAF4, TAF5, TAF6, TAF7, TAF8, TAF9, TAF10, TAF11, TAF12 and TAF13. The TFIID complex structure can be divided into 3 modules TFIID-A, TFIID-B, and TFIID-C. TAF3 forms the TFIID-A module together with TAF5 and TBP. Required in complex with TBPL2 for the differentiation of myoblasts into myocytes. The TAF3-TBPL2 complex replaces TFIID at specific promoters at an early stage in the differentiation process. The chain is Transcription initiation factor TFIID subunit 3 (TAF3) from Homo sapiens (Human).